The following is a 216-amino-acid chain: Pyrophosphatase PpaX (216 aa).

D12 acts as the Nucleophile in catalysis.

Belongs to the HAD-like hydrolase superfamily. PpaX family. The cofactor is Mg(2+).

It catalyses the reaction diphosphate + H2O = 2 phosphate + H(+). Functionally, hydrolyzes pyrophosphate formed during P-Ser-HPr dephosphorylation by HPrK/P. Might play a role in controlling the intracellular pyrophosphate pool. The protein is Pyrophosphatase PpaX of Bacillus pumilus (strain SAFR-032).